Here is an 818-residue protein sequence, read N- to C-terminus: Rho GTPase-activating protein 44 (818 aa).

The region spanning Gln-14–Glu-249 is the BAR domain. Residues Lys-255–Phe-445 form the Rho-GAP domain. 3 disordered regions span residues Ala-467–Ser-493, Ser-530–Thr-772, and Thr-789–Leu-818. Over residues Pro-479–Arg-489 the composition is skewed to basic and acidic residues. Phosphoserine is present on Ser-493. Over residues Gln-563–Gly-579 the composition is skewed to low complexity. A compositionally biased stretch (polar residues) spans Gly-598–Thr-611. 2 stretches are compositionally biased toward low complexity: residues Ala-614 to Pro-641 and Ser-688 to Ala-708. Residues Lys-731 to Leu-818 form an interaction with BST2 region. Residues Val-746–Glu-757 are compositionally biased toward polar residues. A PDZ-binding motif is present at residues Met-764–Gly-767. The segment covering Pro-794–Ser-809 has biased composition (basic and acidic residues). Residue Ser-809 is modified to Phosphoserine. The PDZ-binding motif lies at Ser-815–Leu-818.

As to quaternary structure, interacts with BST2 (via cytoplasmic domain). Interacts (probably via PDZ-binding motif) with SHANK3 (via PDZ domain); the interaction takes place in dendritic spines and promotes GRIA1 exocytosis. As to expression, highly expressed in brain. Expressed at weak level in other tissues.

The protein resides in the cell projection. The protein localises to the dendritic spine. It is found in the recycling endosome. Its subcellular location is the presynapse. It localises to the dendrite. Functionally, GTPase-activating protein (GAP) that stimulates the GTPase activity of Rho-type GTPases. Thereby, controls Rho-type GTPases cycling between their active GTP-bound and inactive GDP-bound states. Acts as a GAP at least for CDC42 and RAC1. In neurons, is involved in dendritic spine formation and synaptic plasticity in a specific RAC1-GAP activity. Limits the initiation of exploratory dendritic filopodia. Recruited to actin-patches that seed filopodia, binds specifically to plasma membrane sections that are deformed inward by acto-myosin mediated contractile forces. Acts through GAP activity on RAC1 to reduce actin polymerization necessary for filopodia formation. In association with SHANK3, promotes GRIA1 exocytosis from recycling endosomes and spine morphological changes associated to long-term potentiation. This Homo sapiens (Human) protein is Rho GTPase-activating protein 44.